Consider the following 842-residue polypeptide: Xyloglucanase Xgh74A (842 aa).

Residues 1-32 form the signal peptide; that stretch reads MVKKFTSKIKAAVFAAVVAATAIFGPAISSQA. The Nucleophile role is filled by aspartate 70. 4 BNR repeats span residues 134-144, 185-196, 252-262, and 358-368; these read RSTDRGETWEK, WRSTDYGVTWSK, YRSTDGGVTWK, and FRSTDGGATWK. Aspartate 480 functions as the Proton donor in the catalytic mechanism. 5 BNR repeats span residues 533 to 541, 577 to 586, 616 to 626, 660 to 671, and 708 to 718; these read FSYDGGRNW, VTTDNGNSWK, YISTDGGLTFT, WRSTDGGYTFEK, and FRSDDAGKTWV. The 71-residue stretch at 771–841 folds into the Dockerin domain; it reads DKGLVGDLNG…LLQAIPELPK (71 aa).

This sequence belongs to the glycosyl hydrolase 74 family.

Hydrolyzes the glucosidic bonds of unbranched Glc residues in tamarind seed xyloglucan, producing XXXG, XLXG, XXLG and XLLG. Has low activity on carboxymethylcellulose, lichenan,hydroxyethylcellulose and glucuronoxylan, and no activity on xylan, polygalaturonic acid, wheat arabinoxylan, rhamnogalacturan, curdlan, laminarin, galactomannan, galactan, arabinan and pachyman or amorphous cellulose. In Acetivibrio thermocellus (Hungateiclostridium thermocellum), this protein is Xyloglucanase Xgh74A.